The chain runs to 263 residues: Phosphonoacetaldehyde hydrolase (263 aa).

Asp10 functions as the Nucleophile in the catalytic mechanism. Positions 10 and 12 each coordinate Mg(2+). Lys51 (schiff-base intermediate with substrate) is an active-site residue. Asp184 serves as a coordination point for Mg(2+).

Belongs to the HAD-like hydrolase superfamily. PhnX family. In terms of assembly, homodimer. The cofactor is Mg(2+).

The enzyme catalyses phosphonoacetaldehyde + H2O = acetaldehyde + phosphate + H(+). Functionally, involved in phosphonate degradation. This Bacteroides fragilis (strain ATCC 25285 / DSM 2151 / CCUG 4856 / JCM 11019 / LMG 10263 / NCTC 9343 / Onslow / VPI 2553 / EN-2) protein is Phosphonoacetaldehyde hydrolase.